The sequence spans 86 residues: MERNQRKTLVGRVVSDKMDKTITVVVETKRNHPVYGKRINYSKKYKAHDENNVAKEGDIVRIMETRPLSATKHFRLVEVVEEAVII.

The protein belongs to the universal ribosomal protein uS17 family. In terms of assembly, part of the 30S ribosomal subunit.

Functionally, one of the primary rRNA binding proteins, it binds specifically to the 5'-end of 16S ribosomal RNA. This Streptococcus thermophilus (strain CNRZ 1066) protein is Small ribosomal subunit protein uS17.